The sequence spans 685 residues: Sulfite reductase [ferredoxin], chloroplastic (685 aa).

A chloroplast-targeting transit peptide spans 1–51 (MTTSFAAAALRDPKLQIPNYHGLRSSSAASSLSRNALSVPSSTRSSSLIRA). [4Fe-4S] cluster is bound by residues Cys495, Cys501, Cys541, and Cys545. Position 545 (Cys545) interacts with siroheme.

Belongs to the nitrite and sulfite reductase 4Fe-4S domain family. Monomer. Interacts with ferredoxin. It depends on siroheme as a cofactor. Requires [4Fe-4S] cluster as cofactor. Phosphorylated; this phosphorylation reduces DNA-binding. As to expression, expressed in leaves, stems, and roots.

It localises to the plastid. It is found in the chloroplast stroma. The protein resides in the chloroplast nucleoid. The protein localises to the plastid stroma. The catalysed reaction is hydrogen sulfide + 6 oxidized [2Fe-2S]-[ferredoxin] + 3 H2O = sulfite + 6 reduced [2Fe-2S]-[ferredoxin] + 7 H(+). Its function is as follows. Essential protein with sulfite reductase activity required in assimilatory sulfate reduction pathway during both primary and secondary metabolism and thus involved in development and growth. In terms of biological role, DNA-binding protein that binds to both double-stranded and single-stranded DNA without significant sequence specificity to reversibly repress the transcriptional activity of chloroplast nucleoids by promoting DNA compaction and possibly regulate DNA replication. This is Sulfite reductase [ferredoxin], chloroplastic (SIR) from Pisum sativum (Garden pea).